The chain runs to 350 residues: Probable choline kinase 2 (350 aa).

The ATP site is built by arginine 73, glutamine 210, and aspartate 227.

Belongs to the choline/ethanolamine kinase family.

It carries out the reaction choline + ATP = phosphocholine + ADP + H(+). Its pathway is phospholipid metabolism; phosphatidylcholine biosynthesis; phosphocholine from choline: step 1/1. Functionally, involved in phospholipid biosynthesis. Catalyzes the first step in phosphatidylcholine biosynthesis. The sequence is that of Probable choline kinase 2 from Arabidopsis thaliana (Mouse-ear cress).